A 479-amino-acid polypeptide reads, in one-letter code: UDP-glycosyltransferase 85A8 (479 aa).

UDP-alpha-D-glucose contacts are provided by residues serine 302, tryptophan 358–cysteine 359, histidine 376–glutamate 384, and phenylalanine 398–glutamine 401.

Belongs to the UDP-glycosyltransferase family.

Its function is as follows. May glycosylate diterpenes or flavonols in leaves. In Stevia rebaudiana (Stevia), this protein is UDP-glycosyltransferase 85A8.